Here is a 194-residue protein sequence, read N- to C-terminus: Potassium-transporting ATPase KdpC subunit (194 aa).

The chain crosses the membrane as a helical span at residues 12 to 34 (LFLLLLTGGVYPLLTTALGQWWF).

This sequence belongs to the KdpC family. As to quaternary structure, the system is composed of three essential subunits: KdpA, KdpB and KdpC.

It localises to the cell inner membrane. Its function is as follows. Part of the high-affinity ATP-driven potassium transport (or Kdp) system, which catalyzes the hydrolysis of ATP coupled with the electrogenic transport of potassium into the cytoplasm. This subunit acts as a catalytic chaperone that increases the ATP-binding affinity of the ATP-hydrolyzing subunit KdpB by the formation of a transient KdpB/KdpC/ATP ternary complex. This is Potassium-transporting ATPase KdpC subunit from Salmonella heidelberg (strain SL476).